An 887-amino-acid polypeptide reads, in one-letter code: Alanine--tRNA ligase (887 aa).

Zn(2+) contacts are provided by His-581, His-585, Cys-683, and His-687.

This sequence belongs to the class-II aminoacyl-tRNA synthetase family. Requires Zn(2+) as cofactor.

The protein resides in the cytoplasm. The enzyme catalyses tRNA(Ala) + L-alanine + ATP = L-alanyl-tRNA(Ala) + AMP + diphosphate. Its function is as follows. Catalyzes the attachment of alanine to tRNA(Ala) in a two-step reaction: alanine is first activated by ATP to form Ala-AMP and then transferred to the acceptor end of tRNA(Ala). Also edits incorrectly charged Ser-tRNA(Ala) and Gly-tRNA(Ala) via its editing domain. In Ehrlichia ruminantium (strain Gardel), this protein is Alanine--tRNA ligase.